A 1295-amino-acid polypeptide reads, in one-letter code: Unconventional myosin-VI (1295 aa).

Positions 2-53 (EDGRPVWAPHPTEGFQMGNIVDIGPDSLTIEPLGQKGKTFLALINQVFPAEE) constitute a Myosin N-terminal SH3-like domain. Positions 57–771 (KDVEDNCSLM…KFAEFDQIMK (715 aa)) constitute a Myosin motor domain. Residue 151 to 158 (GESGAGKT) coordinates ATP. The residue at position 267 (S267) is a Phosphoserine. Positions 273–317 (YLNRGCTRYFANKETDKQILQNRKTPEHLKAGSLKDPLLDDHGDF) are responsible for slow ATPase activity. T405 is subject to Phosphothreonine. S604 carries the post-translational modification Phosphoserine. An actin-binding region spans residues 651 to 673 (LNLLLDKLRSTGASFIRCIKPNL). Positions 782 to 810 (KRVNHWLICSRWKKVQWCSLSVIKLKNKI) are required for binding calmodulin. Positions 813–842 (RAEACIKMQKTIRMWLCKRRHKPRIDGLVK) constitute an IQ domain. The segment at 835–916 (PRIDGLVKVG…EVLLSALQKK (82 aa)) is three-helix bundle. The segment at 917-984 (KQQEEEAERL…EDDEKRIQAE (68 aa)) is SAH. Residues 934 to 955 (EKERKRREEDEQRRRKEEEERR) form a disordered region. Residues 1061-1286 (KEMSEILSRG…ESRQARPTYA (226 aa)) form an interaction with TAX1BP1 and CALCOCO2/NDP52 region. An interaction with OPTN region spans residues 1117-1119 (RRL). S1156 bears the Phosphoserine mark. The interval 1158–1286 (QQNPAAQLPA…ESRQARPTYA (129 aa)) is interaction with TOM1.

It belongs to the TRAFAC class myosin-kinesin ATPase superfamily. Myosin family. As to quaternary structure, homodimer; dimerization seems to implicate the unfolding of the three-helix bundle region creating an additional calmodulin binding site, and cargo binding. Able to function as a monomer under specific conditions in vitro. Forms a complex with CFTR and DAB2 in the apical membrane of epithelial cells. Component of the DISP/DOCK7-induced septin displacement complex, at least composed of DOCK7, LRCH3 and MYO6. Binding to calmodulin through a unique insert, not found in other myosins, located in the neck region between the motor domain and the IQ domain appears to contribute to the directionality reversal. This interaction occurs only if the C-terminal lobe of calmodulin is occupied by calcium. Interaction with F-actin/ACTN1 occurs only at the apical brush border domain of the proximal tubule cells. Interacts with DAB2. In vitro, the C-terminal globular tail binds a C-terminal region of DAB2. Interacts with CFTR. Interacts with CABP5. Interacts (via residues 1158-1286) with TOM1 (via residues 392-463). Interacts (via residues 1060-1285) with OPTN. Interacts (via residues 1060-1285) with TAX1BP1 and CALCOCO2/NDP52. Interacts with TOM1L2. Interacts with CLIC5; may work together in a complex which also includes RDX and MYO6 to stabilize linkages between the plasma membrane and subjacent actin cytoskeleton at the base of stereocilia. Post-translationally, phosphorylation in the motor domain, induced by EGF, results in translocation of MYO6 from the cell surface to membrane ruffles and affects F-actin dynamics. Phosphorylated in vitro by p21-activated kinase (PAK). Expressed in the retina (at protein level).

It localises to the golgi apparatus. The protein resides in the trans-Golgi network membrane. It is found in the nucleus. The protein localises to the cytoplasm. Its subcellular location is the perinuclear region. It localises to the membrane. The protein resides in the clathrin-coated pit. It is found in the cytoplasmic vesicle. The protein localises to the clathrin-coated vesicle. Its subcellular location is the cell projection. It localises to the filopodium. The protein resides in the ruffle membrane. It is found in the microvillus. The protein localises to the cytosol. Functionally, myosins are actin-based motor molecules with ATPase activity. Unconventional myosins serve in intracellular movements. Myosin 6 is a reverse-direction motor protein that moves towards the minus-end of actin filaments. Has slow rate of actin-activated ADP release due to weak ATP binding. Functions in a variety of intracellular processes such as vesicular membrane trafficking and cell migration. Required for the structural integrity of the Golgi apparatus via the p53-dependent pro-survival pathway. Appears to be involved in a very early step of clathrin-mediated endocytosis in polarized epithelial cells. Together with TOM1, mediates delivery of endocytic cargo to autophagosomes thereby promoting autophagosome maturation and driving fusion with lysosomes. Links TOM1 with autophagy receptors, such as TAX1BP1; CALCOCO2/NDP52 and OPTN. May act as a regulator of F-actin dynamics. As part of the DISP complex, may regulate the association of septins with actin and thereby regulate the actin cytoskeleton. May play a role in transporting DAB2 from the plasma membrane to specific cellular targets. May play a role in the extension and network organization of neurites. Required for structural integrity of inner ear hair cells. Required for the correct localization of CLIC5 and RDX at the stereocilium base. Modulates RNA polymerase II-dependent transcription. The protein is Unconventional myosin-VI of Bos taurus (Bovine).